The sequence spans 159 residues: Transmembrane protein 89 (159 aa).

An N-terminal signal peptide occupies residues 1 to 24 (MLHVLASLPLLLLLVTSASTHAWS). Residues 25 to 63 (RPLWYQVGLDLQPWGCQPKSVEGCRGGLSCPGYWLGPGA) are Extracellular-facing. A helical membrane pass occupies residues 64-86 (SRIYPVAAVMITTTMLMICRKIL). Topologically, residues 87–159 (QGRRRSQATK…QIKGTSTQSG (73 aa)) are cytoplasmic. The tract at residues 91–110 (RSQATKGEHPQVTTEPCGPW) is disordered.

It is found in the membrane. The protein is Transmembrane protein 89 (TMEM89) of Homo sapiens (Human).